We begin with the raw amino-acid sequence, 628 residues long: Choline transporter-like protein 2 (628 aa).

The Cytoplasmic portion of the chain corresponds to 1–31; sequence MSSEDLQDHHEIGNEVIKKKGVYTKKKCQDC. A helical membrane pass occupies residues 32–52; sequence FFLILFLLFWAGMIVVAAFGV. Residues 53 to 204 are Extracellular-facing; that stretch reads KNGKPDRIVK…EILTDLTNSW (152 aa). N82, N118, N146, and N168 each carry an N-linked (GlcNAc...) asparagine glycan. The helical transmembrane segment at 205-225 threads the bilayer; sequence RYLIYGALIAMGLGLTWIFLL. R226 is a topological domain (cytoplasmic). The helical transmembrane segment at 227 to 247 threads the bilayer; the sequence is FFAGFITWLTVFAAYACLGLL. Residues 248–282 are Extracellular-facing; it reads TAQVYFQWQDSKDAYENTIPSQRLVMQEKNILALK. The chain crosses the membrane as a helical span at residues 283 to 303; sequence VIFIILCVVCGIFALILLALF. Topologically, residues 304–319 are cytoplasmic; that stretch reads SRIRIAIRIIKECSRA. A helical membrane pass occupies residues 320–340; it reads IGIMPSIFFFPIFIFLLLCGF. The Extracellular segment spans residues 341–381; sequence TVYWVYIGVYLATAGSPTYDDQYRFTGYEADSKLQKIQIYH. A helical membrane pass occupies residues 382–402; it reads FFGYLWTFAFILALNQTTIAG. Residues 403 to 432 are Cytoplasmic-facing; sequence AISSWYWVQDKKDTPFFPVWSSFFRVIRYH. The chain crosses the membrane as a helical span at residues 433–453; it reads LGSIALGSLILAIVQFIRWVL. Topologically, residues 454 to 530 are extracellular; it reads RFLEKKFKGK…RVAAVNLVSS (77 aa). The helical transmembrane segment at 531 to 551 threads the bilayer; it reads FLMFLGRVFITAATVGISLYL. Residues 552 to 559 are Cytoplasmic-facing; that stretch reads LKEHENLS. Residues 560–580 form a helical membrane-spanning segment; that stretch reads FYIIPVILIGFIAFAISTGFM. Residues 581-628 are Extracellular-facing; sequence SVYDMSIDTMLLCFCEDCERNDGSPERPYYMSKSLRKFVDGKGRSKCC.

The protein belongs to the CTL (choline transporter-like) family.

It is found in the cell membrane. The protein resides in the mitochondrion outer membrane. It catalyses the reaction choline(out) + n H(+)(in) = choline(in) + n H(+)(out). The catalysed reaction is ethanolamine(out) + n H(+)(in) = ethanolamine(in) + n H(+)(out). Choline/H+ antiporter, mainly in mitochodria. Also acts as a low-affinity ethanolamine/H+ antiporter, regulating the supply of extracellular ethanolamine (Etn) for the CDP-Etn pathway, redistribute intracellular Etn and balance the CDP-Cho and CDP-Etn arms of the Kennedy pathway. The protein is Choline transporter-like protein 2 (slc44a2) of Dictyostelium discoideum (Social amoeba).